A 510-amino-acid chain; its full sequence is Zinc finger protein 692 (510 aa).

Disordered stretches follow at residues 1–20 (MAAS…RQLD) and 121–306 (WGPS…EDTA). Ser161 carries the post-translational modification Phosphoserine. Over residues 163–172 (CDERAQEARM) the composition is skewed to basic and acidic residues. The segment covering 188 to 201 (EDGEEEEEDEEEML) has biased composition (acidic residues). Ser225 bears the Phosphoserine mark. Residues 237-265 (APAPAAVPAPLASPSSSASSLGSGAPGPV) are compositionally biased toward low complexity. Residues 278-297 (QADQQTEPLASPGSQAQSAL) show a composition bias toward polar residues. 5 C2H2-type zinc fingers span residues 322 to 347 (LPCD…KYQH), 353 to 377 (FSCP…VKLH), 383 to 405 (YICE…RRIH), 411 to 433 (LQCE…RRKH), and 442 to 465 (FPCE…SKSH). Ser464 carries the post-translational modification Phosphoserine.

It belongs to the krueppel C2H2-type zinc-finger protein family. Phosphorylation at Ser-464 results in loss of DNA-binding activity.

It localises to the nucleus. May act as an transcriptional repressor for PCK1 gene expression, in turn may participate in the hepatic gluconeogenesis regulation through the activated AMPK signaling pathway. This chain is Zinc finger protein 692, found in Bos taurus (Bovine).